Here is a 1249-residue protein sequence, read N- to C-terminus: Clustered mitochondria protein homolog (1249 aa).

The segment at 1–32 (MAQTNGELEHSKETPEQLTNGNHPEETQEEDN) is disordered. Residues 318-562 (DITRSQENYL…RVTPLDVMWQ (245 aa)) form the Clu domain. Basic and acidic residues predominate over residues 605-628 (KAEADAAKAESSEATESKEQASEE). Disordered stretches follow at residues 605–636 (KAEA…DQER) and 868–903 (KAPA…AAKE). TPR repeat units follow at residues 974-1007 (AKLY…TERT), 1016-1049 (ILSY…WKII), and 1058-1091 (ITTM…CESL). The segment at 1174–1249 (NMNPRSLGTK…KLRGSKKSSA (76 aa)) is disordered. Residues 1176–1190 (NPRSLGTKIQPQVGQ) are compositionally biased toward polar residues.

It belongs to the CLU family. As to quaternary structure, may associate with the eukaryotic translation initiation factor 3 (eIF-3) complex.

It localises to the cytoplasm. Its function is as follows. mRNA-binding protein involved in proper cytoplasmic distribution of mitochondria. The polypeptide is Clustered mitochondria protein homolog (Aspergillus niger (strain ATCC MYA-4892 / CBS 513.88 / FGSC A1513)).